The primary structure comprises 590 residues: Aspartate--tRNA(Asp/Asn) ligase (590 aa).

Glu176 is a binding site for L-aspartate. The interval 200–203 (QLFK) is aspartate. The L-aspartate site is built by Arg222 and His451. Residue 222-224 (RDE) coordinates ATP. Residue Glu485 participates in ATP binding. Arg492 serves as a coordination point for L-aspartate. 537–540 (GIDR) contacts ATP.

This sequence belongs to the class-II aminoacyl-tRNA synthetase family. Type 1 subfamily. As to quaternary structure, homodimer.

Its subcellular location is the cytoplasm. It carries out the reaction tRNA(Asx) + L-aspartate + ATP = L-aspartyl-tRNA(Asx) + AMP + diphosphate. Aspartyl-tRNA synthetase with relaxed tRNA specificity since it is able to aspartylate not only its cognate tRNA(Asp) but also tRNA(Asn). Reaction proceeds in two steps: L-aspartate is first activated by ATP to form Asp-AMP and then transferred to the acceptor end of tRNA(Asp/Asn). The polypeptide is Aspartate--tRNA(Asp/Asn) ligase (Ehrlichia canis (strain Jake)).